The chain runs to 148 residues: Hemoglobin subunit gamma (148 aa).

The Globin domain maps to 3–148; sequence HFTAEEKAII…VAIAMGHKYH (146 aa). Heme b is bound by residues His-64 and His-93.

Belongs to the globin family. Heterotetramer of two alpha chains and two gamma chains in fetal hemoglobin (Hb F). Red blood cells.

Gamma chains make up the fetal hemoglobin F, in combination with alpha chains. The polypeptide is Hemoglobin subunit gamma (HBG) (Carlito syrichta (Philippine tarsier)).